A 111-amino-acid polypeptide reads, in one-letter code: T cell receptor beta variable 30 (111 aa).

A signal peptide spans 1-18 (MLCSLLALLLGTFFGVRS). An Ig-like domain is found at 19–111 (QTIHQWPATL…DSGFYLCAWS (93 aa)). Cysteine 40 and cysteine 108 are disulfide-bonded. The N-linked (GlcNAc...) asparagine glycan is linked to asparagine 80.

As to quaternary structure, alpha-beta TR is a heterodimer composed of an alpha and beta chain; disulfide-linked. The alpha-beta TR is associated with the transmembrane signaling CD3 coreceptor proteins to form the TR-CD3 (TcR or TCR). The assembly of alpha-beta TR heterodimers with CD3 occurs in the endoplasmic reticulum where a single alpha-beta TR heterodimer associates with one CD3D-CD3E heterodimer, one CD3G-CD3E heterodimer and one CD247 homodimer forming a stable octameric structure. CD3D-CD3E and CD3G-CD3E heterodimers preferentially associate with TR alpha and TR beta chains, respectively. The association of the CD247 homodimer is the last step of TcR assembly in the endoplasmic reticulum and is required for transport to the cell surface.

The protein resides in the cell membrane. Its function is as follows. V region of the variable domain of T cell receptor (TR) beta chain that participates in the antigen recognition. Alpha-beta T cell receptors are antigen specific receptors which are essential to the immune response and are present on the cell surface of T lymphocytes. Recognize peptide-major histocompatibility (MH) (pMH) complexes that are displayed by antigen presenting cells (APC), a prerequisite for efficient T cell adaptive immunity against pathogens. Binding of alpha-beta TR to pMH complex initiates TR-CD3 clustering on the cell surface and intracellular activation of LCK that phosphorylates the ITAM motifs of CD3G, CD3D, CD3E and CD247 enabling the recruitment of ZAP70. In turn ZAP70 phosphorylates LAT, which recruits numerous signaling molecules to form the LAT signalosome. The LAT signalosome propagates signal branching to three major signaling pathways, the calcium, the mitogen-activated protein kinase (MAPK) kinase and the nuclear factor NF-kappa-B (NF-kB) pathways, leading to the mobilization of transcription factors that are critical for gene expression and essential for T cell growth and differentiation. The T cell repertoire is generated in the thymus, by V-(D)-J rearrangement. This repertoire is then shaped by intrathymic selection events to generate a peripheral T cell pool of self-MH restricted, non-autoaggressive T cells. Post-thymic interaction of alpha-beta TR with the pMH complexes shapes TR structural and functional avidity. The sequence is that of T cell receptor beta variable 30 from Homo sapiens (Human).